The chain runs to 162 residues: Peptidyl-prolyl cis-trans isomerase-like 1 (162 aa).

The region spanning 1-155 (MTTNIVLETT…EEVKIVKARV (155 aa)) is the PPIase cyclophilin-type domain.

Belongs to the cyclophilin-type PPIase family. PPIL1 subfamily.

It carries out the reaction [protein]-peptidylproline (omega=180) = [protein]-peptidylproline (omega=0). PPIases accelerate the folding of proteins. It catalyzes the cis-trans isomerization of proline imidic peptide bonds in oligopeptides. This Gibberella zeae (strain ATCC MYA-4620 / CBS 123657 / FGSC 9075 / NRRL 31084 / PH-1) (Wheat head blight fungus) protein is Peptidyl-prolyl cis-trans isomerase-like 1 (CYP1).